The sequence spans 261 residues: GTP cyclohydrolase FolE2 (261 aa).

Belongs to the GTP cyclohydrolase IV family.

It carries out the reaction GTP + H2O = 7,8-dihydroneopterin 3'-triphosphate + formate + H(+). Its pathway is cofactor biosynthesis; 7,8-dihydroneopterin triphosphate biosynthesis; 7,8-dihydroneopterin triphosphate from GTP: step 1/1. Converts GTP to 7,8-dihydroneopterin triphosphate. The sequence is that of GTP cyclohydrolase FolE2 from Fervidobacterium nodosum (strain ATCC 35602 / DSM 5306 / Rt17-B1).